Here is a 155-residue protein sequence, read N- to C-terminus: Urease accessory protein UreE (155 aa).

It belongs to the UreE family.

The protein localises to the cytoplasm. Functionally, involved in urease metallocenter assembly. Binds nickel. Probably functions as a nickel donor during metallocenter assembly. The polypeptide is Urease accessory protein UreE (Deinococcus radiodurans (strain ATCC 13939 / DSM 20539 / JCM 16871 / CCUG 27074 / LMG 4051 / NBRC 15346 / NCIMB 9279 / VKM B-1422 / R1)).